Here is a 362-residue protein sequence, read N- to C-terminus: Sphingolipid delta(4)-desaturase (362 aa).

Positions 1–10 (MAESTATTTA) are enriched in low complexity. The disordered stretch occupies residues 1-20 (MAESTATTTAVPPPAEESWN). 3 consecutive transmembrane segments (helical) span residues 60-80 (PLTK…AYLL), 90-110 (FFLT…LAIH), and 121-143 (TLYN…AASF). The short motif at 110–114 (HELSH) is the Histidine box-1 element. The short motif at 147-151 (HMEHH) is the Histidine box-2 element. A run of 3 helical transmembrane segments spans residues 169–189 (LILF…LLFY), 200–220 (PFTL…YLVV), and 228–248 (LAYF…AGHF). A Histidine box-3 motif is present at residues 290 to 294 (HIEHH).

The protein belongs to the fatty acid desaturase type 1 family. DEGS subfamily.

Its subcellular location is the membrane. The enzyme catalyses an N-acylsphinganine + 2 Fe(II)-[cytochrome b5] + O2 + 2 H(+) = an N-acylsphing-4-enine + 2 Fe(III)-[cytochrome b5] + 2 H2O. Its pathway is lipid metabolism; sphingolipid metabolism. Functionally, delta(4)-fatty-acid desaturase which introduces a double bond at the 4-position in the long-chain base (LCB) of ceramides. Required for sphingosine biosynthesis. The sequence is that of Sphingolipid delta(4)-desaturase (dsd1) from Schizosaccharomyces pombe (strain 972 / ATCC 24843) (Fission yeast).